Consider the following 187-residue polypeptide: Threonylcarbamoyl-AMP synthase (187 aa).

Residues 3–187 (NSELLKIIWA…LLNGYLYRKR (185 aa)) form the YrdC-like domain.

This sequence belongs to the SUA5 family. TsaC subfamily.

The protein localises to the cytoplasm. The enzyme catalyses L-threonine + hydrogencarbonate + ATP = L-threonylcarbamoyladenylate + diphosphate + H2O. Functionally, required for the formation of a threonylcarbamoyl group on adenosine at position 37 (t(6)A37) in tRNAs that read codons beginning with adenine. Catalyzes the conversion of L-threonine, HCO(3)(-)/CO(2) and ATP to give threonylcarbamoyl-AMP (TC-AMP) as the acyladenylate intermediate, with the release of diphosphate. The chain is Threonylcarbamoyl-AMP synthase from Riesia pediculicola (strain USDA).